The sequence spans 592 residues: UvrABC system protein C (592 aa).

Residues 14-91 (KKPGCYLWKN…IKKHKPRYNI (78 aa)) enclose the GIY-YIG domain. The region spanning 197 to 232 (DQVLKDLKEKESIASEKFDFEQAKKYLDLQKAINLI) is the UVR domain.

The protein belongs to the UvrC family. Interacts with UvrB in an incision complex.

Its subcellular location is the cytoplasm. In terms of biological role, the UvrABC repair system catalyzes the recognition and processing of DNA lesions. UvrC both incises the 5' and 3' sides of the lesion. The N-terminal half is responsible for the 3' incision and the C-terminal half is responsible for the 5' incision. The chain is UvrABC system protein C from Mycoplasmoides gallisepticum (strain R(low / passage 15 / clone 2)) (Mycoplasma gallisepticum).